The primary structure comprises 339 residues: tRNA-specific 2-thiouridylase MnmA (339 aa).

ATP contacts are provided by residues 6–13 (AMSGGVDS) and methionine 32. Cysteine 92 functions as the Nucleophile in the catalytic mechanism. Cysteine 92 and cysteine 186 form a disulfide bridge. Glycine 116 serves as a coordination point for ATP. The interval 134–136 (KDQ) is interaction with tRNA. Cysteine 186 (cysteine persulfide intermediate) is an active-site residue. An interaction with tRNA region spans residues 288–289 (RY).

Belongs to the MnmA/TRMU family.

Its subcellular location is the cytoplasm. It catalyses the reaction S-sulfanyl-L-cysteinyl-[protein] + uridine(34) in tRNA + AH2 + ATP = 2-thiouridine(34) in tRNA + L-cysteinyl-[protein] + A + AMP + diphosphate + H(+). In terms of biological role, catalyzes the 2-thiolation of uridine at the wobble position (U34) of tRNA, leading to the formation of s(2)U34. This Campylobacter curvus (strain 525.92) protein is tRNA-specific 2-thiouridylase MnmA.